A 310-amino-acid chain; its full sequence is GMP synthase [glutamine-hydrolyzing] subunit B (310 aa).

The GMPS ATP-PPase domain occupies 1–187 (MSFSDYISRI…LGLPTDIQPF (187 aa)). 27-33 (SGGQDSS) lines the ATP pocket.

As to quaternary structure, heterodimer composed of a glutamine amidotransferase subunit (A) and a GMP-binding subunit (B).

It carries out the reaction XMP + L-glutamine + ATP + H2O = GMP + L-glutamate + AMP + diphosphate + 2 H(+). The protein operates within purine metabolism; GMP biosynthesis; GMP from XMP (L-Gln route): step 1/1. In terms of biological role, catalyzes the synthesis of GMP from XMP. This is GMP synthase [glutamine-hydrolyzing] subunit B (guaAB) from Thermoplasma volcanium (strain ATCC 51530 / DSM 4299 / JCM 9571 / NBRC 15438 / GSS1).